The chain runs to 343 residues: MQEIVIPLKEKSYKVFLGELPEIELKQKALIISDSIVAGLHLSYLLKRLKALEVRVCVIESGEKYKNFHSLERILNNAFEMQLNRHSLMIALGGGVISDMVGFASSIYFRGIDFINIPTTLLAQVDASVGGKTGINTPYGKNLIGSFHQPKAVYIDLAFLKTLEKREFQAGVAEIIKMAVCFDKNLVERLEMKDLKDCLEEVIFQSVNIKAQVVMQDEKEQNIRAGLNYGHTFGHAIEKETDYERFLHGEAIAIGMRMANDLALSLGMLTLKEYERIENLLEKFDLIFHYKIIDIQKFYERLFLDKKSENKTIKFILPKGIGAFEVASHIPKETILKVLEKWH.

NAD(+)-binding positions include 61–66, 95–99, 119–120, Lys-132, Lys-141, and 159–162; these read SGEKYK, GVISD, TT, and FLKT. Residues Glu-174, His-231, and His-248 each coordinate Zn(2+).

Belongs to the sugar phosphate cyclases superfamily. Dehydroquinate synthase family. Co(2+) serves as cofactor. Zn(2+) is required as a cofactor. It depends on NAD(+) as a cofactor.

It localises to the cytoplasm. The enzyme catalyses 7-phospho-2-dehydro-3-deoxy-D-arabino-heptonate = 3-dehydroquinate + phosphate. It functions in the pathway metabolic intermediate biosynthesis; chorismate biosynthesis; chorismate from D-erythrose 4-phosphate and phosphoenolpyruvate: step 2/7. Functionally, catalyzes the conversion of 3-deoxy-D-arabino-heptulosonate 7-phosphate (DAHP) to dehydroquinate (DHQ). This Helicobacter pylori (strain P12) protein is 3-dehydroquinate synthase.